Here is a 236-residue protein sequence, read N- to C-terminus: DNA repair protein RecO (236 aa).

Belongs to the RecO family.

Functionally, involved in DNA repair and RecF pathway recombination. The polypeptide is DNA repair protein RecO (Haemophilus influenzae (strain PittGG)).